Consider the following 700-residue polypeptide: MSDQQNQDQGQGQGYNQYNQYGQYNQYYNQQGYQGYNGQQGAPQGYQAYQAYGQQPQGAYQGYNPQQAQGYQPYQGYNAQQQGYNAQQGGHNNNYNKNYNNKNSYNNYNKQGYQGAQGYNAQQPTGYAAPAQSSSQGMTLKDFQNQQGSTNAAKPKPKLKLASSSGIKLVGAKKPVAPKTEKTDESKEATKTTDDNEEAQSELPKIDDLKISEAEKPKTKENTPSADDTSSEKTTSAKADTSTGGANSVDALIKEQEDEVDEEVVKDMFGGKDHVSIIFMGHVDAGKSTMGGNLLYLTGSVDKRTVEKYEREAKEAGRQGWYLSWVMDTNKEERNDGKTIEVGRAYFETEKRRYTILDAPGHKMYVSEMIGGASQADIGILVISARKGEYETGFEKGGQTREHALLAKTQGVNKMIVVINKMDDPTVGWDKERYDHCVGNLTNFLKAVGYNVKEDVIFMPVSGYTGAGLKERVDPKDCPWYTGPSLLEYLDNMKTTDRHINAPFMLPIASKMKDMGTVVEGKIESGHIRKGNQTLLMPNRTSVEILTIYNETESEVDMAVCGEQVRLRIKGVEEEEISAGFVLTSPKNPVKNVTRFVAQIAIVELKSIMSAGFSCVMHIHTAIEEVTVTRLLHKLEKGSNRKSKKPPAFAKKGMKIIAVIETNEPVCVETYDDYPQLGRFTLRDQGTTIAIGKIVKILEN.

The interval 10-136 (GQGQGYNQYN…YAAPAQSSSQ (127 aa)) is several sort of repeats. A compositionally biased stretch (low complexity) spans 114-123 (QGAQGYNAQQ). Residues 114–250 (QGAQGYNAQQ…TSTGGANSVD (137 aa)) are disordered. The segment covering 131-151 (AQSSSQGMTLKDFQNQQGSTN) has biased composition (polar residues). Residues 137 to 267 (GMTLKDFQNQ…DEVDEEVVKD (131 aa)) are charged. 2 stretches are compositionally biased toward basic and acidic residues: residues 179–194 (KTEKTDESKEATKTTD) and 204–221 (PKIDDLKISEAEKPKTKE). Positions 222 to 246 (NTPSADDTSSEKTTSAKADTSTGGA) are enriched in polar residues. One can recognise a tr-type G domain in the interval 272 to 498 (KDHVSIIFMG…YLDNMKTTDR (227 aa)). Residues 281–288 (GHVDAGKS) form a G1 region. 281–288 (GHVDAGKS) is a GTP binding site. Positions 337 to 341 (GKTIE) are G2. Thr-355 is subject to Phosphothreonine. The G3 stretch occupies residues 358-361 (DAPG). Residues 358 to 362 (DAPGH) and 420 to 423 (NKMD) contribute to the GTP site. The interval 420 to 423 (NKMD) is G4. Residues 462–464 (SGY) form a G5 region.

This sequence belongs to the TRAFAC class translation factor GTPase superfamily. Classic translation factor GTPase family. ERF3 subfamily.

The protein resides in the cytoplasm. In terms of biological role, involved in translation termination. Stimulates the activity of ERF1. Binds guanine nucleotides. This chain is Eukaryotic peptide chain release factor GTP-binding subunit (SUP35), found in Kluyveromyces lactis (strain ATCC 8585 / CBS 2359 / DSM 70799 / NBRC 1267 / NRRL Y-1140 / WM37) (Yeast).